Reading from the N-terminus, the 870-residue chain is Protein RRP6-like 2 (870 aa).

The 3'-5' exonuclease domain occupies Val-263–Leu-428. The 81-residue stretch at Asn-479–Phe-559 folds into the HRDC domain. Disordered regions lie at residues Ser-583 to Leu-605, Gly-649 to Lys-668, Thr-688 to Pro-775, and Phe-821 to Asn-870. 2 stretches are compositionally biased toward basic and acidic residues: residues Ser-720–Lys-729 and Phe-821–Ala-834. The span at Lys-840–Phe-849 shows a compositional bias: polar residues.

It localises to the nucleus. It is found in the nucleolus. Its subcellular location is the cytoplasm. Its function is as follows. Acts as an important epigenetic regulator through multiple silencing mechanisms. Involved in association with RRP6L1 in the silencing of the solo LTR locus. Controls levels of non-coding RNAs (ncRNAs) from the solo LTR locus. Seems to function independently of the RNA-mediated gene silencing (RdDM) pathway. Functions redundantly with RRP6L1 in the regulation of FLC locus. Participates in the maintenance of trimethylated 'Lys-27' (H3K27me3) at FLC locus via the regulation of antisense long non-coding RNAs (lncRNAs) and the regulation of diverse antisense RNAs derived from the FLC locus. Seems not involved in the exosomal RNA degradation. May be involved in poly(A)-mediated RNA degradation. The sequence is that of Protein RRP6-like 2 from Arabidopsis thaliana (Mouse-ear cress).